The chain runs to 325 residues: D-alanine--D-alanine ligase (325 aa).

The ATP-grasp domain occupies 102–300 (KQIFRAAGIP…FTELVERMLQ (199 aa)). 130 to 185 (AAELGSPLVIKPSNNGSTVGISIVRDERSFAQGLELARSVSSRIFLERYVPGKEIT) contributes to the ATP binding site. Mg(2+) contacts are provided by aspartate 254, glutamate 267, and asparagine 269.

This sequence belongs to the D-alanine--D-alanine ligase family. It depends on Mg(2+) as a cofactor. Requires Mn(2+) as cofactor.

The protein localises to the cytoplasm. It carries out the reaction 2 D-alanine + ATP = D-alanyl-D-alanine + ADP + phosphate + H(+). Its pathway is cell wall biogenesis; peptidoglycan biosynthesis. Functionally, cell wall formation. This chain is D-alanine--D-alanine ligase, found in Synechococcus sp. (strain JA-2-3B'a(2-13)) (Cyanobacteria bacterium Yellowstone B-Prime).